Consider the following 200-residue polypeptide: Rho GDP-dissociation inhibitor 2 (200 aa).

A disordered region spans residues 1–39 (MTEKDAQPQLEEADDDLDSKLNYKPPPQKSLKELQEMDK). The residue at position 2 (T2) is an N-acetylthreonine. K20 is modified (N6-acetyllysine). Y23 carries the post-translational modification Phosphotyrosine. N6-acetyllysine is present on residues K24, K39, K46, K101, and K123. Basic and acidic residues predominate over residues 30 to 39 (SLKELQEMDK). A Phosphoserine modification is found at S144. Position 174 is an N6-acetyllysine (K174).

The protein belongs to the Rho GDI family. In terms of assembly, interacts with RHOA. Interacts with RAC1. Interacts with RAC2. Interacts with CDC42. Preferentially expressed in hematopoietic cells.

Its subcellular location is the cytoplasm. The protein localises to the cytosol. In terms of biological role, regulates the GDP/GTP exchange reaction of the Rho proteins by inhibiting the dissociation of GDP from them, and the subsequent binding of GTP to them. Regulates reorganization of the actin cytoskeleton mediated by Rho family members. This is Rho GDP-dissociation inhibitor 2 (Arhgdib) from Mus musculus (Mouse).